A 246-amino-acid polypeptide reads, in one-letter code: AIGDKPGPNITATYGSKWLEARATFYGSNPRGAAPDDHGGACGYKDVDKPPFDGMTACGNEPIFKDGLGCRACYEIKCKEPVECSGEPVLVKITDKNYEHIAAYHFDLSGKAFGAMAKKGQEDKLRKAGELTLQFRRVKCKYPSGTKITFHIEKGSNDHYLALLVKYAAGDGNIVAVDIKPRDSDEFIPMKSSWGAIWRIDPKKPLKGPFSIRLTSEGGAHLVQDDVIPANWKPDTVYTSKLQFGA.

N-linked (GlcNAc...) asparagine glycosylation occurs at asparagine 9. The 107-residue stretch at 39–145 (GGACGYKDVD…RRVKCKYPSG (107 aa)) folds into the Expansin-like EG45 domain. The 82-residue stretch at 159–240 (HYLALLVKYA…NWKPDTVYTS (82 aa)) folds into the Expansin-like CBD domain.

Belongs to the expansin family. Expansin B subfamily.

The protein resides in the secreted. In Cynodon dactylon (Bermuda grass), this protein is Major pollen allergen Cyn d 1 (CYND1).